A 226-amino-acid chain; its full sequence is Prolactin (226 aa).

The first 29 residues, 1–29, serve as a signal peptide directing secretion; the sequence is MNSQGSDRKAVTLLLLVMSNLLFCQNAHP. Cysteines 33 and 38 form a disulfide. 2 positions are modified to phosphoserine: S53 and S117. Intrachain disulfides connect C85-C201 and C218-C226.

It belongs to the somatotropin/prolactin family. In terms of assembly, interacts with PRLR.

Its subcellular location is the secreted. Its function is as follows. Prolactin acts primarily on the mammary gland by promoting lactation. The protein is Prolactin (PRL) of Mesocricetus auratus (Golden hamster).